The sequence spans 2126 residues: MWPGPALLLLGLGLGLGSQPPPTGPRGLPGVLRGAPGLGQGAESSVRGGDTGGLSPRAAPRHASPTPPRRCPSGAAARVLLKVNSSDPAAAKANVSCQTAPCIMQPVKINRKDQNAPLILSRDEEATLNITVRWYCPDALVIRKSWVYFSVASVNDTPDWNRPVLLPQVAVSKGFSLHIPKYALPYGVYVFNFTLSIFRWDLAWPTVTGSDIIYIWVRKRPLKAVLLGAPRVTVKFSDELILNGSMSYDPEADIPTWGLQFFWYCTTNPRYYSGNYVLVINQAVCHPEQDSLNWPWAVGSVLTIPPKTLRGNGVYYFRMVVQKQNRTAFSDKTVHVLQGLQPKAHISCIENCGPTLGVSDRFSLFLNCPSCGRQDLYSWSILSLTGHEVMFDWAGQAITRRNGPYLSIKAFAFRNFLENRVWVSLILKSWSGMTTTLRHPVVINHGPRVGKCKINPASGISMVTKFAVECSDFKDENLPLKYKIIVSELDSIGAISSVEENTLGSVVYSGAEPITPAFFLPVGTVTDEYNVRLYVQVYDSLGTFSQVTLQATVTAPTVRDSSKDVLQQLLNVTMKPTSLLSTLLQKQDWLQAGYLTYVVISVLNNIKGEQELQDDRARLLEHLVKQSLTFAMNTADEIGQSVMVITKLTQKASDLSQADLEATSFRLRQASQDLQEYQHRHKHLQQVEVVGTGILTSLSNLLKLINPYYTLQDPLFVVESLSDTILANKVPGSKTTALRTSNFNMYVEKVENWNVFKAFRNDSLCPNCLRATLNASTVPRLPAKAPISMMFCEFADDPFPWLTYPENISVDVVGFRMTGVADNNKVIEITPDIAEVYLVRKDLTPSSFNLTVGPGIKSDGFSKVTTGGISFEVDSRWTGELLIHIVTNVTVLFEALVYEGCQLTPTNLMATFLVPNDIPPIVKWSGLFDPTCSVKEARVVCLSSSLLRSIAQRRFSFKYNISMVLQASRFVLKPTNKLVRIALFMVHCLDMYGIQSDWQQSTCVLGEKTTWKTVHCVCRNGRRSRRQLTSVKLTYHHLHTHFVTAKVIVVPNPVDLRLAIISNLTQNPATFLAVLFIMILYAILAFWALHRDVIDLYFRDNVVILTDNDPFDTLCYLVTIFTGSRWGSGTRANVFIQLMGTEGTSDVHCLSHPYFKTLYRGSINTFLLTTKNDLGDIHSIRVWHDNSGEAPSWYLSRIKVENLFNKRIWLFVCRRWLSVDTTLDATFSVTNPDEPLKRTDFFMIDVRDKLRKNHMWISIFTEIVPKPFNRLQRLSCCLAMLLSSLVCNIMFFNLNQKEKIESRHMHIIRSMLIGIESVVITIPVQLLITFFFTYSQKNLKMNLDKVAPQKHPLMSEEGLSWKERLHKWHEYEMKALPRRAAVSTSAPEEKEAFETSQKHEKADTQMSNKNSSNNNQEASEGVPPKAFSSQPHTTESVQKKTQIILPRWCVYIAWFLVFATSGISSFFIVFYGVTYGYAKSIEWLFASFCSFCQSVFLVQPCNILLRSGTRSYKPKYCKNLSWSSKYHYSEIRLQGLTMTQEEMEQLHEDIAYVRSLSMYQPITEDKIQILRRENRIRRRSFLFLSYLVTHFIFLTLLLLLIFSLRHNDSFYYNQFIRHRFSVDLATVMKLGDIYTWLHGVFLPLLHNDPNPTFLPDSSSKILGLPLVRQVRARPSNKTCLLAKKFVQSSVAGEIHCHPQYGIDPEDTQHYSSVWSKAGKQSTDKASHGFTYKPPGKRWVYHSYGVLNTYGSGGYVFYFFPGQQMFNSTVRLKELEGKNWLDELTWAVIVELTTLNPDTSLMCSISVVFEVSPLGVVNSSLSVYSFSLADFNRKTSSEIYLYAAILIFFCAYVVDEGYIIRQERASYIRSVYNLLNFSLKCMFALLIVLFFWKYFLATKMVQLYLADPEAFIPFHAVSRVDHFMRIILAFLLFLTILKTLRYSRFFYNVRLAQKAIQAALPGICHTALVVSIYSFMYVAFGYLVFGQHEWNYSNMIHATQTIFSYCVSAFQNTEFSGNKVLGVLFLSSFMLVMICIFINLFQAVILSAYDEMKQPVYEEPSDEAEAVTYLCNRLKSGFDFLTTRSRDKDQSNFFVDMLYGQPEKNTRRFLGLKARNINGKKMIYLVV.

A signal peptide spans 1–18 (MWPGPALLLLGLGLGLGS). Residues 19-1068 (QPPPTGPRGL…AIISNLTQNP (1050 aa)) are Extracellular-facing. Residues 20-71 (PPPTGPRGLPGVLRGAPGLGQGAESSVRGGDTGGLSPRAAPRHASPTPPRRC) are disordered. N-linked (GlcNAc...) asparagine glycans are attached at residues asparagine 84, asparagine 94, asparagine 129, asparagine 192, asparagine 243, asparagine 325, asparagine 571, asparagine 761, asparagine 774, asparagine 807, asparagine 849, asparagine 888, asparagine 960, and asparagine 1063. Residues 102–797 (CIMQPVKINR…SMMFCEFADD (696 aa)) form the REJ domain. Residues 1069–1089 (ATFLAVLFIMILYAILAFWAL) traverse the membrane as a helical segment. At 1090–1273 (HRDVIDLYFR…VPKPFNRLQR (184 aa)) the chain is on the cytoplasmic side. Positions 1114-1231 (LCYLVTIFTG…TLDATFSVTN (118 aa)) constitute a PLAT domain. Residues 1274–1294 (LSCCLAMLLSSLVCNIMFFNL) form a helical membrane-spanning segment. Residues 1295 to 1311 (NQKEKIESRHMHIIRSM) lie on the Extracellular side of the membrane. Residues 1312-1332 (LIGIESVVITIPVQLLITFFF) traverse the membrane as a helical segment. Topologically, residues 1333-1449 (TYSQKNLKMN…KTQIILPRWC (117 aa)) are cytoplasmic. A disordered region spans residues 1379–1431 (RAAVSTSAPEEKEAFETSQKHEKADTQMSNKNSSNNNQEASEGVPPKAFSSQP). A compositionally biased stretch (basic and acidic residues) spans 1387-1403 (PEEKEAFETSQKHEKAD). A helical transmembrane segment spans residues 1450 to 1470 (VYIAWFLVFATSGISSFFIVF). Over 1471-1483 (YGVTYGYAKSIEW) the chain is Extracellular. A helical membrane pass occupies residues 1484–1504 (LFASFCSFCQSVFLVQPCNIL). The Cytoplasmic segment spans residues 1505–1580 (LRSGTRSYKP…RRENRIRRRS (76 aa)). Residues 1581-1601 (FLFLSYLVTHFIFLTLLLLLI) traverse the membrane as a helical segment. Topologically, residues 1602–1838 (FSLRHNDSFY…DFNRKTSSEI (237 aa)) are extracellular. N-linked (GlcNAc...) asparagine glycans are attached at residues asparagine 1607, asparagine 1676, asparagine 1766, and asparagine 1817. The helical transmembrane segment at 1839–1859 (YLYAAILIFFCAYVVDEGYII) threads the bilayer. Over 1860-1875 (RQERASYIRSVYNLLN) the chain is Cytoplasmic. Residues 1876–1896 (FSLKCMFALLIVLFFWKYFLA) form a helical membrane-spanning segment. The Extracellular portion of the chain corresponds to 1897–1918 (TKMVQLYLADPEAFIPFHAVSR). Residues 1919 to 1939 (VDHFMRIILAFLLFLTILKTL) form a helical membrane-spanning segment. Residues 1940–1964 (RYSRFFYNVRLAQKAIQAALPGICH) lie on the Cytoplasmic side of the membrane. The chain crosses the membrane as a helical span at residues 1965–1985 (TALVVSIYSFMYVAFGYLVFG). The Extracellular portion of the chain corresponds to 1986 to 2019 (QHEWNYSNMIHATQTIFSYCVSAFQNTEFSGNKV). Residues 2020 to 2040 (LGVLFLSSFMLVMICIFINLF) traverse the membrane as a helical segment. Over 2041-2126 (QAVILSAYDE…NGKKMIYLVV (86 aa)) the chain is Cytoplasmic.

Belongs to the polycystin family. Exclusively expressed in testis.

The protein resides in the cell membrane. Its subcellular location is the cytoplasmic vesicle. It is found in the secretory vesicle. It localises to the acrosome membrane. The protein localises to the nucleus. Its function is as follows. Testis-specific protein that controls sperm transport and the timing of zona pellucida-evoked exocytosis of the sperm acrosome. This chain is Polycystin family receptor for egg jelly (Pkdrej), found in Mus musculus (Mouse).